Here is a 151-residue protein sequence, read N- to C-terminus: Protein-export protein SecB (151 aa).

This sequence belongs to the SecB family. In terms of assembly, homotetramer, a dimer of dimers. One homotetramer interacts with 1 SecA dimer.

It is found in the cytoplasm. Its function is as follows. One of the proteins required for the normal export of preproteins out of the cell cytoplasm. It is a molecular chaperone that binds to a subset of precursor proteins, maintaining them in a translocation-competent state. It also specifically binds to its receptor SecA. This is Protein-export protein SecB from Acinetobacter baylyi (strain ATCC 33305 / BD413 / ADP1).